The primary structure comprises 237 residues: MKFSFFTLFPSLISGYFEDSILKRARDEGRIEIEWVNFREFSQDRFKKVDEYQIGGGAGLVIEPRVVTQAISELKAKNQDAKILFLLPAGKPFTHQDACRLAQKESHLVLVCGRYEGIDERAIEANADEVFCMGDYILTGGEIAALALCDAVSRQIPGVLGNEESLQGESFDSFLLEAPVFARSKTPEGLSAPSEYSKGNHAKICALKRRLSLAKTQYYRPDLYKKYKIQESDKGKK.

S-adenosyl-L-methionine-binding positions include Gly113 and 133 to 138; that span reads MGDYIL.

Belongs to the RNA methyltransferase TrmD family. Homodimer.

It is found in the cytoplasm. It carries out the reaction guanosine(37) in tRNA + S-adenosyl-L-methionine = N(1)-methylguanosine(37) in tRNA + S-adenosyl-L-homocysteine + H(+). In terms of biological role, specifically methylates guanosine-37 in various tRNAs. The sequence is that of tRNA (guanine-N(1)-)-methyltransferase from Wolinella succinogenes (strain ATCC 29543 / DSM 1740 / CCUG 13145 / JCM 31913 / LMG 7466 / NCTC 11488 / FDC 602W) (Vibrio succinogenes).